Here is an 84-residue protein sequence, read N- to C-terminus: Small ribosomal subunit protein bS18 (84 aa).

This sequence belongs to the bacterial ribosomal protein bS18 family. Part of the 30S ribosomal subunit. Forms a tight heterodimer with protein bS6.

In terms of biological role, binds as a heterodimer with protein bS6 to the central domain of the 16S rRNA, where it helps stabilize the platform of the 30S subunit. The chain is Small ribosomal subunit protein bS18 from Mycobacterium sp. (strain JLS).